Here is a 545-residue protein sequence, read N- to C-terminus: MTTKYIFVTGGVVSSLGKGIAAASLAAVLEARGLKVTMLKLDPYINVDPGTMSPIQHGEVFVTEDGAETDLDLGHYERFIRTKMSRRNNFTTGRVYSDVLRKERRGDYLGATIQVIPHITNAIKERVIAGAEGHDVAIVEIGGTVGDIESLPFLEAIRQLAVDIGRNNALFMHLTLVPYLAAAGEVKTKPTQHSVKELLSIGIQPDILICRSDRAIPANERAKIALFCNVPERAVISLKDVDSIYKIPALLKSQGLDQLVVDRFGLQCGEANLAEWEQVIYQEANPTGEVTIGMVGKYVSLPDAYKSVNEALKHAGLKNRLSINIRYIDSQDLETKGLEVLDGLDAILVPGGFGERGVEGKILAAQYARENKIPYLGICLGMQVALIEFARHVAGMDGAHSSEFKRDTPYPVVGLITEWIDEEGKVEVRTEGSDLGGTMRLGSQLCHLVEGSKVRALYGSDTIQERHRHRYEVNNTLLPKIEAAGLKVTGLSADKKLVEIVENPDHPWFVAVQFHPEFTSTPRDGHPLFEGFIQAAGEYMKRHLN.

The interval Met-1 to Leu-266 is amidoligase domain. Ser-14 contributes to the CTP binding site. Residue Ser-14 coordinates UTP. ATP-binding positions include Ser-15–Ile-20 and Asp-72. Residues Asp-72 and Glu-140 each coordinate Mg(2+). CTP-binding positions include Asp-147–Glu-149, Lys-187–Gln-192, and Lys-223. Residues Lys-187–Gln-192 and Lys-223 contribute to the UTP site. Lys-239–Val-241 contacts ATP. A Glutamine amidotransferase type-1 domain is found at Thr-291–Arg-542. Gly-352 is an L-glutamine binding site. Cys-379 serves as the catalytic Nucleophile; for glutamine hydrolysis. Residues Leu-380–Gln-383, Glu-403, and Arg-470 each bind L-glutamine. Catalysis depends on residues His-515 and Glu-517.

Belongs to the CTP synthase family. In terms of assembly, homotetramer.

It carries out the reaction UTP + L-glutamine + ATP + H2O = CTP + L-glutamate + ADP + phosphate + 2 H(+). It catalyses the reaction L-glutamine + H2O = L-glutamate + NH4(+). The enzyme catalyses UTP + NH4(+) + ATP = CTP + ADP + phosphate + 2 H(+). Its pathway is pyrimidine metabolism; CTP biosynthesis via de novo pathway; CTP from UDP: step 2/2. Allosterically activated by GTP, when glutamine is the substrate; GTP has no effect on the reaction when ammonia is the substrate. The allosteric effector GTP functions by stabilizing the protein conformation that binds the tetrahedral intermediate(s) formed during glutamine hydrolysis. Inhibited by the product CTP, via allosteric rather than competitive inhibition. Catalyzes the ATP-dependent amination of UTP to CTP with either L-glutamine or ammonia as the source of nitrogen. Regulates intracellular CTP levels through interactions with the four ribonucleotide triphosphates. The protein is CTP synthase of Tolumonas auensis (strain DSM 9187 / NBRC 110442 / TA 4).